We begin with the raw amino-acid sequence, 429 residues long: UDP-N-acetylglucosamine 1-carboxyvinyltransferase (429 aa).

Residue 22–23 participates in phosphoenolpyruvate binding; it reads KN. R102 contacts UDP-N-acetyl-alpha-D-glucosamine. C126 (proton donor) is an active-site residue. At C126 the chain carries 2-(S-cysteinyl)pyruvic acid O-phosphothioketal. Residues 131 to 135, D316, and I338 each bind UDP-N-acetyl-alpha-D-glucosamine; that span reads RPVDL.

It belongs to the EPSP synthase family. MurA subfamily.

It localises to the cytoplasm. The enzyme catalyses phosphoenolpyruvate + UDP-N-acetyl-alpha-D-glucosamine = UDP-N-acetyl-3-O-(1-carboxyvinyl)-alpha-D-glucosamine + phosphate. Its pathway is cell wall biogenesis; peptidoglycan biosynthesis. Functionally, cell wall formation. Adds enolpyruvyl to UDP-N-acetylglucosamine. The chain is UDP-N-acetylglucosamine 1-carboxyvinyltransferase from Nitrobacter hamburgensis (strain DSM 10229 / NCIMB 13809 / X14).